The chain runs to 211 residues: NADH-quinone oxidoreductase subunit I 1 (211 aa).

2 consecutive 4Fe-4S ferredoxin-type domains span residues 50–80 (LNRH…VEGA) and 96–125 (RVYQ…MTNE). [4Fe-4S] cluster-binding residues include C60, C63, C66, C70, C105, C108, C111, and C115. The segment at 192 to 211 (QEGDSTFGATEPASEEVIRR) is disordered.

The protein belongs to the complex I 23 kDa subunit family. As to quaternary structure, NDH-1 is composed of 14 different subunits. Subunits NuoA, H, J, K, L, M, N constitute the membrane sector of the complex. [4Fe-4S] cluster serves as cofactor.

It is found in the cell membrane. The enzyme catalyses a quinone + NADH + 5 H(+)(in) = a quinol + NAD(+) + 4 H(+)(out). Its function is as follows. NDH-1 shuttles electrons from NADH, via FMN and iron-sulfur (Fe-S) centers, to quinones in the respiratory chain. The immediate electron acceptor for the enzyme in this species is believed to be ubiquinone. Couples the redox reaction to proton translocation (for every two electrons transferred, four hydrogen ions are translocated across the cytoplasmic membrane), and thus conserves the redox energy in a proton gradient. The chain is NADH-quinone oxidoreductase subunit I 1 from Streptomyces coelicolor (strain ATCC BAA-471 / A3(2) / M145).